Here is a 514-residue protein sequence, read N- to C-terminus: Sugar transport protein 10 (514 aa).

The Cytoplasmic segment spans residues 1-18; it reads MAGGAFVSEGGGGGRSYE. Helical transmembrane passes span 19-39, 86-106, 113-133, 135-155, 170-190, 204-224, 285-305, 320-340, 350-370, and 389-409; these read GGVT…GLLF, LFTS…SVIT, VSMF…AFAV, VSML…ANQS, GALN…ANLI, VSLG…FILP, LIFC…VIMF, AALM…FVSI, LLFL…GSFI, and WILA…GPLG. C77 and C449 are joined by a disulfide. Q177 contributes to the beta-D-glucose binding site. Positions 295, 296, 301, and 332 each coordinate beta-D-glucose. W410 provides a ligand contact to beta-D-glucose. The next 2 helical transmembrane spans lie at 428–448 and 453–473; these read INVS…LTML and FGLF…IYFL. At 474 to 514 the chain is on the cytoplasmic side; that stretch reads LPETKGVPIEEMGRVWKQHWFWKKYIPEDAIIGGHDDNNTN.

Belongs to the major facilitator superfamily. Sugar transporter (TC 2.A.1.1) family. In terms of tissue distribution, expressed in primordia of lateral roots, pollinated stigmata, and pollen tubes.

The protein resides in the membrane. It catalyses the reaction D-glucose(out) + H(+)(out) = D-glucose(in) + H(+)(in). It carries out the reaction D-mannose(out) + H(+)(out) = D-mannose(in) + H(+)(in). The enzyme catalyses D-galactose(in) + H(+)(in) = D-galactose(out) + H(+)(out). In terms of biological role, hexose-H(+) symporter that catalyzes the high-affinity uptake of glucose, galactose and mannose. Proton-coupled symporter responsible for the uptake of glucose from the apoplast into the cells. The protein is Sugar transport protein 10 of Arabidopsis thaliana (Mouse-ear cress).